Consider the following 359-residue polypeptide: GTP cyclohydrolase FolE2 (359 aa).

Belongs to the GTP cyclohydrolase IV family.

It carries out the reaction GTP + H2O = 7,8-dihydroneopterin 3'-triphosphate + formate + H(+). It participates in cofactor biosynthesis; 7,8-dihydroneopterin triphosphate biosynthesis; 7,8-dihydroneopterin triphosphate from GTP: step 1/1. Functionally, converts GTP to 7,8-dihydroneopterin triphosphate. The chain is GTP cyclohydrolase FolE2 from Cereibacter sphaeroides (strain ATCC 17025 / ATH 2.4.3) (Rhodobacter sphaeroides).